Consider the following 229-residue polypeptide: uncharacterized protein (229 aa).

Residues 24-78 (LRKWRSIFNASQSDLARKLGISPSVISDYESGRRKPGTAFLKKFVCALIELDGER) form the HTH cro/C1-type domain. The H-T-H motif DNA-binding region spans 35 to 54 (QSDLARKLGISPSVISDYES).

This is an uncharacterized protein from Archaeoglobus fulgidus (strain ATCC 49558 / DSM 4304 / JCM 9628 / NBRC 100126 / VC-16).